We begin with the raw amino-acid sequence, 196 residues long: ATP-dependent Clp protease proteolytic subunit (196 aa).

Serine 101 acts as the Nucleophile in catalysis. Histidine 126 is a catalytic residue.

The protein belongs to the peptidase S14 family. In terms of assembly, component of the chloroplastic Clp protease core complex.

The protein resides in the plastid. It is found in the chloroplast stroma. The enzyme catalyses Hydrolysis of proteins to small peptides in the presence of ATP and magnesium. alpha-casein is the usual test substrate. In the absence of ATP, only oligopeptides shorter than five residues are hydrolyzed (such as succinyl-Leu-Tyr-|-NHMec, and Leu-Tyr-Leu-|-Tyr-Trp, in which cleavage of the -Tyr-|-Leu- and -Tyr-|-Trp bonds also occurs).. Functionally, cleaves peptides in various proteins in a process that requires ATP hydrolysis. Has a chymotrypsin-like activity. Plays a major role in the degradation of misfolded proteins. This chain is ATP-dependent Clp protease proteolytic subunit, found in Lactuca sativa (Garden lettuce).